A 170-amino-acid chain; its full sequence is Photosystem II extrinsic protein V (170 aa).

The N-terminal stretch at 1–34 is a signal peptide; the sequence is MNKILGIDPLKKFIFGISAFVLLFWQLNVGAANA. Residues C70, C73, H74, and H125 each coordinate heme c.

It belongs to the cytochrome c family. PsbV subfamily. PSII is composed of 1 copy each of membrane proteins PsbA, PsbB, PsbC, PsbD, PsbE, PsbF, PsbH, PsbI, PsbJ, PsbK, PsbL, PsbM, PsbT, PsbX, PsbY, PsbZ, Psb30/Ycf12, peripheral proteins PsbO, CyanoQ (PsbQ), PsbU, PsbV and a large number of cofactors. It forms dimeric complexes. Heme c serves as cofactor.

The protein resides in the cellular thylakoid membrane. One of the extrinsic, lumenal subunits of photosystem II (PSII). PSII is a light-driven water plastoquinone oxidoreductase, using light energy to abstract electrons from H(2)O, generating a proton gradient subsequently used for ATP formation. The extrinsic proteins stabilize the structure of photosystem II oxygen-evolving complex (OEC), the ion environment of oxygen evolution and protect the OEC against heat-induced inactivation. Low-potential cytochrome c that plays a role in the OEC of PSII. This Picosynechococcus sp. (strain ATCC 27264 / PCC 7002 / PR-6) (Agmenellum quadruplicatum) protein is Photosystem II extrinsic protein V.